Here is a 196-residue protein sequence, read N- to C-terminus: Calcium channel flower (196 aa).

3 helical membrane passes run 35-55 (LGIVAAFFAILFGLWNVLSII), 70-92 (LAGFVVMALEAPCCFVCIEQVGS), and 113-133 (AVPPIFMCFGLASLFGSGLIF).

This sequence belongs to the calcium channel flower family. Homomultimer. Associates with the dally/ magu complex.

It localises to the cell membrane. Its subcellular location is the cytoplasmic vesicle. The protein resides in the secretory vesicle. It is found in the synaptic vesicle membrane. The protein localises to the presynaptic cell membrane. It localises to the endosome. Its activity is regulated as follows. Channel activity is inhibited by La(3+), which reduces Ca(2+) influx and thus inhibits it's function in promoting activity-dependent bulk endocytosis (ADBE) in response to high stimuli. Its function is as follows. Transmembrane protein which mediates synaptic endocytosis, fitness-based cell culling, neuronal culling, morphogen gradient scaling, and calcium transport. Regulates synaptic endocytosis and hence couples exo- with endocytosis. Controls two major modes of synaptic vesicle (SV) endocytosis in the synaptic boutons of neuromuscular junctions (NMJs); Ca(2+) channel-independent Clathrin-mediated endocytosis (CME) in response to mild stimulation, and Ca(2+) channel-dependent activity-dependent bulk endocytosis (ADBE) in response to strong stimulation. Functions in ADBE and subsequent SV reformation from bulk endosomes by initiating Ca(2+) channel-dependent phosphatidylinositol 4,5-bisphosphate (PtdIns(4,5)P2) compartmentalization in synaptic boutons. There it acts at the periactive zone to provide the low Ca(2+) levels required to initiate Calcineurin activation and upregulate PtdIns(4,5)P2. Conversely PtdIns(4,5)P2 enhances fwe Ca(2+) channel-activity, establishing a positive feedback loop that induces PtdIns(4,5)P2 microdomain at the periactive zone. These microdomains trigger bulk membrane invagination (i.e. ADBE) by triggering actin polymerization while also promoting localization of fwe to bulk endosomes, thereby removing the ADBE trigger to reduce endocytosis and prevent excess membrane uptake. PtdIns(4,5)P2 then promotes SV reformation from the bulk endosomes, to coordinate ADBE and subsequent SV reformation. Different combinations of the flower isoforms at the cell membrane are also required for the identification and elimination of suboptimal or supernumerary cells during development, regeneration, and adulthood. Required for the recognition and elimination of unfit cells in the developing wing during cell competition. In the developing pupal retina, mediates the elimination of unwanted postmitotic neurons, including supernumerary photoreceptor neurons that form at the periphery of the retina and are contained within incomplete ommatidia units. Also required for efficient elimination and replacement of old neurons by newly generated neurons during regeneration in the adult brain following mechanical injury. Downstream of the flower fitness fingerprints, cells identified as unwanted or unfit are eliminated via apoptosis through the expression of ahuizotl (azot). However, the cells marked for elimination by the flower isoforms only undergo apoptosis if additional thresholds are met; (1) their neighboring fit/healthy cells express different levels of the fwe isoforms, and (2) the levels of the protective signal SPARC expressed by the loser or unwanted cells are unable to inhibit caspase activation. These additional thresholds for flower-mediated apoptosis, allows useful cells to recover from transient and limited stress before they are unnecessarily eliminated. Functions with dally and magu in a mechanism of scaling, which utilises apoptosis to ensure that the dpp morphogen gradient, which mediates organ growth, remains proportional to the size of the growing wing. In this mechanism, fwe represses dally- and Magu-dependent activity in expanding the gradient, and dally/Magu inhibits fwe-dependent apoptosis to keep cell death rate low. When the levels of these different proteins are optimally regulated the gradient correctly scales with organ growth but when this fails, fwe-mediated apoptosis is activated to trim the developing tissue to match the correct size of the gradient. This is Calcium channel flower from Drosophila grimshawi (Hawaiian fruit fly).